We begin with the raw amino-acid sequence, 449 residues long: Chromosomal replication initiator protein DnaA (449 aa).

The interval 1–69 (MEKVWLEAQS…VEAISSLTSV (69 aa)) is domain I, interacts with DnaA modulators. The tract at residues 69–112 (VKYQIEFKITEKIPLESKPVDNFTPVIKDNEPSKETNKNIDITA) is domain II. Positions 113-329 (NLNPKYTFDS…GMLIRLGAYA (217 aa)) are domain III, AAA+ region. 4 residues coordinate ATP: G157, G159, K160, and T161. Residues 330 to 449 (SLTGSEITLN…VENLKKELIT (120 aa)) form a domain IV, binds dsDNA region.

It belongs to the DnaA family. Oligomerizes as a right-handed, spiral filament on DNA at oriC.

The protein resides in the cytoplasm. In terms of biological role, plays an essential role in the initiation and regulation of chromosomal replication. ATP-DnaA binds to the origin of replication (oriC) to initiate formation of the DNA replication initiation complex once per cell cycle. Binds the DnaA box (a 9 base pair repeat at the origin) and separates the double-stranded (ds)DNA. Forms a right-handed helical filament on oriC DNA; dsDNA binds to the exterior of the filament while single-stranded (ss)DNA is stabiized in the filament's interior. The ATP-DnaA-oriC complex binds and stabilizes one strand of the AT-rich DNA unwinding element (DUE), permitting loading of DNA polymerase. After initiation quickly degrades to an ADP-DnaA complex that is not apt for DNA replication. Binds acidic phospholipids. This Geotalea uraniireducens (strain Rf4) (Geobacter uraniireducens) protein is Chromosomal replication initiator protein DnaA.